The following is a 570-amino-acid chain: Hydroxylamine reductase (570 aa).

4 residues coordinate [4Fe-4S] cluster: cysteine 5, cysteine 8, cysteine 17, and cysteine 23. Histidine 266, glutamate 290, cysteine 334, cysteine 425, cysteine 453, cysteine 478, glutamate 513, and lysine 515 together coordinate hybrid [4Fe-2O-2S] cluster. Cysteine 425 is modified (cysteine persulfide).

It belongs to the HCP family. Requires [4Fe-4S] cluster as cofactor. The cofactor is hybrid [4Fe-2O-2S] cluster.

It localises to the cytoplasm. It catalyses the reaction A + NH4(+) + H2O = hydroxylamine + AH2 + H(+). Catalyzes the reduction of hydroxylamine to form NH(3) and H(2)O. The polypeptide is Hydroxylamine reductase (Clostridium botulinum (strain Langeland / NCTC 10281 / Type F)).